Here is a 555-residue protein sequence, read N- to C-terminus: Suppressor of tumorigenicity 7 protein-like (555 aa).

Helical transmembrane passes span 36–56 (GLAGTGASLWFVAGLGLLYAL) and 80–100 (FYVALTGTSSLISGLIFIFEW). The segment at 126-148 (TESSISEPGSPSNNRESETSRQN) is disordered.

Belongs to the ST7 family.

It localises to the membrane. This Bos taurus (Bovine) protein is Suppressor of tumorigenicity 7 protein-like (ST7L).